A 716-amino-acid polypeptide reads, in one-letter code: Fatty acid oxidation complex subunit alpha (716 aa).

The segment at 1–189 is enoyl-CoA hydratase/isomerase; sequence MIYQSPTIQV…KVGAIDAVVA (189 aa). Residue Asp-296 participates in substrate binding. The interval 311-716 is 3-hydroxyacyl-CoA dehydrogenase; that stretch reads QAVNSAAVLG…AATNGSYYPA (406 aa). Residues Met-324, Asp-343, 400–402, Lys-407, and Ser-429 each bind NAD(+); that span reads VVE. His-450 acts as the For 3-hydroxyacyl-CoA dehydrogenase activity in catalysis. Asn-453 lines the NAD(+) pocket. The substrate site is built by Asn-500 and Tyr-660.

In the N-terminal section; belongs to the enoyl-CoA hydratase/isomerase family. The protein in the C-terminal section; belongs to the 3-hydroxyacyl-CoA dehydrogenase family. In terms of assembly, heterotetramer of two alpha chains (FadB) and two beta chains (FadA).

It catalyses the reaction a (3S)-3-hydroxyacyl-CoA + NAD(+) = a 3-oxoacyl-CoA + NADH + H(+). The enzyme catalyses a (3S)-3-hydroxyacyl-CoA = a (2E)-enoyl-CoA + H2O. It carries out the reaction a 4-saturated-(3S)-3-hydroxyacyl-CoA = a (3E)-enoyl-CoA + H2O. The catalysed reaction is (3S)-3-hydroxybutanoyl-CoA = (3R)-3-hydroxybutanoyl-CoA. It catalyses the reaction a (3Z)-enoyl-CoA = a 4-saturated (2E)-enoyl-CoA. The enzyme catalyses a (3E)-enoyl-CoA = a 4-saturated (2E)-enoyl-CoA. Its pathway is lipid metabolism; fatty acid beta-oxidation. Its function is as follows. Involved in the aerobic and anaerobic degradation of long-chain fatty acids via beta-oxidation cycle. Catalyzes the formation of 3-oxoacyl-CoA from enoyl-CoA via L-3-hydroxyacyl-CoA. It can also use D-3-hydroxyacyl-CoA and cis-3-enoyl-CoA as substrate. This Shewanella loihica (strain ATCC BAA-1088 / PV-4) protein is Fatty acid oxidation complex subunit alpha.